Here is a 929-residue protein sequence, read N- to C-terminus: Band 4.1-like protein 3 (929 aa).

An N-acetylmethionine modification is found at methionine 1. The disordered stretch occupies residues 1-72 (MTTESGSDSE…STPVKREIGD (72 aa)). Position 2 is an N-acetylthreonine; in Band 4.1-like protein 3, N-terminally processed (threonine 2). Residues 20-33 (QEAAGPQGQAGAQP) are compositionally biased toward low complexity. Serine 96 is subject to Phosphoserine. An FERM domain is found at 118 to 399 (MQCKVTLLDG…EHHTFFRLLL (282 aa)). The interval 402–528 (APPKKFLTLG…PVTALRHEGK (127 aa)) is hydrophilic. 3 positions are modified to phosphoserine: serine 428, serine 451, and serine 486. The segment at 490–554 (LITTVTPEKK…TESDQEEDAE (65 aa)) is disordered. Threonine 495 is subject to Phosphothreonine. Positions 496-516 (PEKKAEEERVEEEDRRKKAEE) are enriched in basic and acidic residues. Position 518 is a phosphothreonine (threonine 518). Basic and acidic residues predominate over residues 523–536 (LRHEGKTDSERTDT). Phosphoserine occurs at positions 525 and 543. The residue at position 545 (threonine 545) is a Phosphothreonine. Serine 547 is subject to Phosphoserine. Residues 559–602 (DLDKTQDELMKHQTNISELKRTFLETSTETALTNEWEKRLSTSP) form a spectrin--actin-binding region. Disordered stretches follow at residues 608-630 (RQED…SGEK), 665-689 (LETK…STEK), and 705-807 (VHAS…SPGG). The residue at position 725 (threonine 725) is a Phosphothreonine. The segment covering 726–737 (PTDRRHTGKGKE) has biased composition (basic and acidic residues). Residues 777–929 (RTSEGLEQKS…TEITPEDGED (153 aa)) are C-terminal (CTD). The span at 789–802 (ESSTVRVESTSVGS) shows a compositional bias: low complexity. Residues serine 802 and serine 804 each carry the phosphoserine modification. Threonine 923 bears the Phosphothreonine mark.

Interacts (via FERM domain) with CADM1. Interacts (via FERM domain) with PRMT3; the interaction is direct and inhibits the protein-arginine N-methyltransferase activity of PRMT3. Interacts with PRMT5. Interacts with PRMT6. As to quaternary structure, has the complete spectrin--actin-binding (SAB) domain and fully interacts with spectrin and actin. As to expression, detected in brain (at protein level). Highest expression in brain, lower in testis, adrenal gland, heart and kidney. Also present in muscle and epithelial cells. Isoform 1 is expressed in brain, isoform 2 is expressed in heart and isoform 3 is mostly expressed in kidney but also in heart and brain. Isoform 6 seems to be most abundant in kidney while isoform 4 and isoform 5 are predominantly expressed in heart and brain.

The protein localises to the cytoplasm. It is found in the cytoskeleton. Its subcellular location is the cell membrane. The protein resides in the cell junction. In terms of biological role, tumor suppressor that inhibits cell proliferation and promotes apoptosis. Modulates the activity of protein arginine N-methyltransferases, including PRMT3 and PRMT5. This is Band 4.1-like protein 3 from Mus musculus (Mouse).